We begin with the raw amino-acid sequence, 209 residues long: Uracil phosphoribosyltransferase (209 aa).

5-phospho-alpha-D-ribose 1-diphosphate is bound by residues Arg79, Arg104, and 131–139 (DPMLATGGS). Residues Val194 and 199–201 (GDA) each bind uracil. Asp200 serves as a coordination point for 5-phospho-alpha-D-ribose 1-diphosphate.

It belongs to the UPRTase family. Mg(2+) serves as cofactor.

The catalysed reaction is UMP + diphosphate = 5-phospho-alpha-D-ribose 1-diphosphate + uracil. The protein operates within pyrimidine metabolism; UMP biosynthesis via salvage pathway; UMP from uracil: step 1/1. Allosterically activated by GTP. Catalyzes the conversion of uracil and 5-phospho-alpha-D-ribose 1-diphosphate (PRPP) to UMP and diphosphate. This Bacillus cytotoxicus (strain DSM 22905 / CIP 110041 / 391-98 / NVH 391-98) protein is Uracil phosphoribosyltransferase.